A 451-amino-acid chain; its full sequence is Heme sensor protein HssS (451 aa).

The next 2 helical transmembrane spans lie at 9–29 (IAIYAITVILFSALMSFLFTN) and 164–184 (IFLAVLITLLLIISISLVIAS). The 53-residue stretch at 186–238 (YSIIKPVTALKNATTRIMKGDFSTPIKQTRHDEIGTLQSRFNTMRQNLGQVDQ) folds into the HAMP domain. Residues 246-451 (NVSHEIKTPL…KTQFIVKLFI (206 aa)) form the Histidine kinase domain. At His-249 the chain carries Phosphohistidine; by autocatalysis.

In terms of processing, autophosphorylated.

The protein resides in the cell membrane. It catalyses the reaction ATP + protein L-histidine = ADP + protein N-phospho-L-histidine.. Functionally, member of the two-component regulatory system HssS/HssR involved in intracellular heme homeostasis and tempering of staphylococcal virulence. HssS functions as a heme sensor histidine kinase which is autophosphorylated at a histidine residue and transfers its phosphate group to an aspartate residue of HssR. HssR/HssS activates the expression of HrtAB, an efflux pump, in response to extracellular heme, hemin, hemoglobin or blood. This is Heme sensor protein HssS (hssS) from Staphylococcus epidermidis (strain ATCC 12228 / FDA PCI 1200).